The following is a 233-amino-acid chain: Adenosine 5'-phosphosulfate reductase (233 aa).

[4Fe-4S] cluster contacts are provided by cysteine 120, cysteine 121, cysteine 203, and cysteine 206. Cysteine 229 serves as the catalytic Nucleophile; cysteine thiosulfonate intermediate.

The protein belongs to the PAPS reductase family. CysH subfamily. It depends on [4Fe-4S] cluster as a cofactor.

It is found in the cytoplasm. It carries out the reaction [thioredoxin]-disulfide + sulfite + AMP + 2 H(+) = adenosine 5'-phosphosulfate + [thioredoxin]-dithiol. It participates in sulfur metabolism; hydrogen sulfide biosynthesis; sulfite from sulfate. Its function is as follows. Catalyzes the formation of sulfite from adenosine 5'-phosphosulfate (APS) using thioredoxin as an electron donor. The chain is Adenosine 5'-phosphosulfate reductase from Bacillus velezensis (strain DSM 23117 / BGSC 10A6 / LMG 26770 / FZB42) (Bacillus amyloliquefaciens subsp. plantarum).